The sequence spans 365 residues: Chorismate synthase (365 aa).

Arg46 lines the NADP(+) pocket. FMN is bound by residues 123–125 (RSS), 241–242 (NG), Gly281, 296–300 (KPTPS), and Arg322.

It belongs to the chorismate synthase family. Homotetramer. FMNH2 is required as a cofactor.

The enzyme catalyses 5-O-(1-carboxyvinyl)-3-phosphoshikimate = chorismate + phosphate. The protein operates within metabolic intermediate biosynthesis; chorismate biosynthesis; chorismate from D-erythrose 4-phosphate and phosphoenolpyruvate: step 7/7. Its function is as follows. Catalyzes the anti-1,4-elimination of the C-3 phosphate and the C-6 proR hydrogen from 5-enolpyruvylshikimate-3-phosphate (EPSP) to yield chorismate, which is the branch point compound that serves as the starting substrate for the three terminal pathways of aromatic amino acid biosynthesis. This reaction introduces a second double bond into the aromatic ring system. This is Chorismate synthase from Helicobacter pylori (strain Shi470).